The primary structure comprises 144 residues: 3-dehydroquinate dehydratase (144 aa).

Y24 functions as the Proton acceptor in the catalytic mechanism. Positions 73, 79, and 86 each coordinate substrate. The active-site Proton donor is H99. Substrate-binding positions include 100 to 101 and R110; that span reads LS.

This sequence belongs to the type-II 3-dehydroquinase family. In terms of assembly, homododecamer.

It carries out the reaction 3-dehydroquinate = 3-dehydroshikimate + H2O. Its pathway is metabolic intermediate biosynthesis; chorismate biosynthesis; chorismate from D-erythrose 4-phosphate and phosphoenolpyruvate: step 3/7. Functionally, catalyzes a trans-dehydration via an enolate intermediate. The chain is 3-dehydroquinate dehydratase from Shewanella sp. (strain MR-4).